The following is a 571-amino-acid chain: Urease subunit alpha (571 aa).

A Urease domain is found at 133–571; the sequence is AGIDTHIHFI…VALNQRYFFS (439 aa). Ni(2+) is bound by residues His-138, His-140, and Lys-221. At Lys-221 the chain carries N6-carboxylysine. His-223 is a substrate binding site. 2 residues coordinate Ni(2+): His-250 and His-276. The active-site Proton donor is the His-324. Asp-364 contributes to the Ni(2+) binding site.

Belongs to the metallo-dependent hydrolases superfamily. Urease alpha subunit family. As to quaternary structure, heterotrimer of UreA (gamma), UreB (beta) and UreC (alpha) subunits. Three heterotrimers associate to form the active enzyme. Ni cation serves as cofactor. In terms of processing, carboxylation allows a single lysine to coordinate two nickel ions.

The protein resides in the cytoplasm. It carries out the reaction urea + 2 H2O + H(+) = hydrogencarbonate + 2 NH4(+). Its pathway is nitrogen metabolism; urea degradation; CO(2) and NH(3) from urea (urease route): step 1/1. This chain is Urease subunit alpha, found in Photorhabdus laumondii subsp. laumondii (strain DSM 15139 / CIP 105565 / TT01) (Photorhabdus luminescens subsp. laumondii).